The primary structure comprises 488 residues: Dihydrolipoyl dehydrogenase, mitochondrial (488 aa).

A mitochondrion-targeting transit peptide spans 1–25; the sequence is MLRINRISNLRTFGQRFFSTEQQDV. FAD is bound by residues 52 to 61, Lys70, Gly134, and 163 to 165; these read EKRGKLGGTC and TGS. A disulfide bond links Cys61 and Cys66. NAD(+)-binding positions include 200 to 207, Glu223, Val257, and Gly294; that span reads GGGVIGLE. Residues Asp335 and 341-344 contribute to the FAD site; that span reads MLAH. Residue His467 is the Proton acceptor of the active site.

Belongs to the class-I pyridine nucleotide-disulfide oxidoreductase family. It depends on FAD as a cofactor.

It is found in the mitochondrion matrix. The enzyme catalyses N(6)-[(R)-dihydrolipoyl]-L-lysyl-[protein] + NAD(+) = N(6)-[(R)-lipoyl]-L-lysyl-[protein] + NADH + H(+). The protein is Dihydrolipoyl dehydrogenase, mitochondrial (lpd) of Dictyostelium discoideum (Social amoeba).